We begin with the raw amino-acid sequence, 170 residues long: Adenine phosphoribosyltransferase (170 aa).

The protein belongs to the purine/pyrimidine phosphoribosyltransferase family. In terms of assembly, homodimer.

It is found in the cytoplasm. The enzyme catalyses AMP + diphosphate = 5-phospho-alpha-D-ribose 1-diphosphate + adenine. Its pathway is purine metabolism; AMP biosynthesis via salvage pathway; AMP from adenine: step 1/1. Its function is as follows. Catalyzes a salvage reaction resulting in the formation of AMP, that is energically less costly than de novo synthesis. The sequence is that of Adenine phosphoribosyltransferase from Bacillus velezensis (strain DSM 23117 / BGSC 10A6 / LMG 26770 / FZB42) (Bacillus amyloliquefaciens subsp. plantarum).